The chain runs to 245 residues: Type III pantothenate kinase (245 aa).

6–13 is a binding site for ATP; sequence DVGNTAMK. Substrate is bound by residues Tyr-93 and 100–103; that span reads GVDR. The active-site Proton acceptor is the Asp-102. Residue Asp-121 coordinates K(+). Ser-124 is a binding site for ATP. Residue Thr-175 coordinates substrate.

Belongs to the type III pantothenate kinase family. In terms of assembly, homodimer. NH4(+) is required as a cofactor. The cofactor is K(+).

It is found in the cytoplasm. The catalysed reaction is (R)-pantothenate + ATP = (R)-4'-phosphopantothenate + ADP + H(+). It functions in the pathway cofactor biosynthesis; coenzyme A biosynthesis; CoA from (R)-pantothenate: step 1/5. Functionally, catalyzes the phosphorylation of pantothenate (Pan), the first step in CoA biosynthesis. The protein is Type III pantothenate kinase of Alcanivorax borkumensis (strain ATCC 700651 / DSM 11573 / NCIMB 13689 / SK2).